The chain runs to 807 residues: F-box protein YLR352W (807 aa).

An F-box domain is found at 220-266 (LNDCIDLPSHVLWKILKMLPELQKLDLSHTSIDDSTLYHGIPHWKNL). The span at 607-616 (DNNSHVEDSQ) shows a compositional bias: basic and acidic residues. Disordered stretches follow at residues 607 to 647 (DNNS…NPFA) and 716 to 739 (HLFE…EHSS). 2 stretches are compositionally biased toward polar residues: residues 627–644 (SLLS…SSAN) and 723–736 (SRSG…LTGE).

In terms of assembly, interacts with SKP1 and CDC53. Component of the probable SCF(YBR352W) complex containing CDC53, SKP1, RBX1 and YBR352W.

It functions in the pathway protein modification; protein ubiquitination. Substrate recognition component of a SCF (SKP1-CUL1-F-box protein) E3 ubiquitin-protein ligase complex which mediates the ubiquitination and subsequent proteasomal degradation of target proteins. Probably recognizes and binds to phosphorylated target proteins. This chain is F-box protein YLR352W, found in Saccharomyces cerevisiae (strain ATCC 204508 / S288c) (Baker's yeast).